The chain runs to 2128 residues: Non-reducing polyketide synthase albA (2128 aa).

Positions 8 to 244 (YLFGDQTSDI…VKAPIHGPYH (237 aa)) are N-terminal acylcarrier protein transacylase domain (SAT). Residues 375-806 (NSKIAIIGMS…GGNTALLLED (432 aa)) enclose the Ketosynthase family 3 (KS3) domain. Active-site for beta-ketoacyl synthase activity residues include cysteine 547, histidine 682, and histidine 724. Residues 912 to 1232 (FVFTGQGAQY…LASLHLAGID (321 aa)) form a malonyl-CoA:ACP transacylase (MAT) domain region. Catalysis depends on serine 1001, which acts as the For acyl/malonyl transferase activity. The interval 1286-1425 (HEYLTTAAQK…CTVRFFDCAA (140 aa)) is N-terminal hotdog fold. Positions 1286-1598 (HEYLTTAAQK…FQALSRKILD (313 aa)) constitute a PKS/mFAS DH domain. The product template (PT) domain stretch occupies residues 1290–1603 (TTAAQKVIET…RKILDTVLPP (314 aa)). Catalysis depends on histidine 1326, which acts as the Proton acceptor; for dehydratase activity. The interval 1452-1598 (DAHRLGRGMV…FQALSRKILD (147 aa)) is C-terminal hotdog fold. Aspartate 1511 acts as the Proton donor; for dehydratase activity in catalysis. The region spanning 1618–1695 (PSAPSLVKRA…DFKQFLAPMS (78 aa)) is the Carrier 1 domain. Serine 1655 is subject to O-(pantetheine 4'-phosphoryl)serine. The segment at 1695–1740 (SQGEASDGSTSDPESSSSFNGGSSTDESSAGSPVSSPPNEKVTQVE) is disordered. Residues 1700-1723 (SDGSTSDPESSSSFNGGSSTDESS) are compositionally biased toward low complexity. Residues 1724–1740 (AGSPVSSPPNEKVTQVE) are compositionally biased toward polar residues. Residues 1739-1816 (VEQHATIKEI…DVEDALGLKP (78 aa)) enclose the Carrier 2 domain. Serine 1776 is modified (O-(pantetheine 4'-phosphoryl)serine). The tract at residues 1854–2126 (SPHPRSTSIL…ELGSFIGNAM (273 aa)) is claisen cyclase domain. Serine 1944 functions as the For Claisen cyclase activity in the catalytic mechanism.

It carries out the reaction 6 malonyl-CoA + acetyl-CoA + 6 H(+) = naphtopyrone YWA1 + 6 CO2 + 7 CoA + H2O. It participates in secondary metabolite biosynthesis. Functionally, non-reducing polyketide synthase; part of the gene cluster that mediates the biosynthesis of aurasperone B, a dimeric gamma-naphthopyrone. The first step in the biosynthesis of aurasperone B is the production of gamma-naphthopyrone precursor YWA1 by the non-reducing polyketide synthase albA, via condensation of one acetyl-CoA starter unit with 6 malonyl-CoA units. YWA1 is then methylated by aunE at position C-6 to yield foncesin which is further methylated at position C-8 by aunD to produce fonsecin B. A key enzyme in the biosynthetic pathway is the cytochrome P450 monooxygenase aunB which catalyzes the oxidative dimerization of fonsecin B to aurasperone B. AunB also catalyzes the oxidative dimerization of rubrofusarin B into aurasperone A. This chain is Non-reducing polyketide synthase albA, found in Aspergillus niger (strain ATCC 1015 / CBS 113.46 / FGSC A1144 / LSHB Ac4 / NCTC 3858a / NRRL 328 / USDA 3528.7).